A 210-amino-acid polypeptide reads, in one-letter code: Cilia- and flagella-associated protein 418 (210 aa).

Residues M1–N77 are required for interaction with FAM161A. The segment at L24–F59 is disordered. Over residues S41–F59 the composition is skewed to basic and acidic residues.

As to quaternary structure, interacts (via N-terminus) with FAM161A (via central region); the interaction is direct.

It localises to the cytoplasm. Its subcellular location is the photoreceptor inner segment. May be involved in photoreceptor outer segment disk morphogenesis. This is Cilia- and flagella-associated protein 418 from Rattus norvegicus (Rat).